The following is a 750-amino-acid chain: Catalase-peroxidase (750 aa).

The segment at residues Trp112–Tyr235 is a cross-link (tryptophyl-tyrosyl-methioninium (Trp-Tyr) (with M-261)). His113 (proton acceptor) is an active-site residue. A cross-link (tryptophyl-tyrosyl-methioninium (Tyr-Met) (with W-112)) is located at residues Tyr235 to Met261. Position 276 (His276) interacts with heme b.

The protein belongs to the peroxidase family. Peroxidase/catalase subfamily. Homodimer or homotetramer. The cofactor is heme b. Post-translationally, formation of the three residue Trp-Tyr-Met cross-link is important for the catalase, but not the peroxidase activity of the enzyme.

It carries out the reaction H2O2 + AH2 = A + 2 H2O. It catalyses the reaction 2 H2O2 = O2 + 2 H2O. Bifunctional enzyme with both catalase and broad-spectrum peroxidase activity. This chain is Catalase-peroxidase, found in Christiangramia forsetii (strain DSM 17595 / CGMCC 1.15422 / KT0803) (Gramella forsetii).